The sequence spans 959 residues: Translation initiation factor IF-2 (959 aa).

Residues 1–10 are compositionally biased toward basic and acidic residues; sequence MSDKTNDDKT. Residues 1–374 are disordered; sequence MSDKTNDDKT…SQMQETREKI (374 aa). Polar residues predominate over residues 27-37; sequence EQSTVRQNFSH. Composition is skewed to low complexity over residues 63 to 118 and 128 to 138; these read AAAA…VTKP and QRPGGQQAQRP. 2 stretches are compositionally biased toward basic and acidic residues: residues 154 to 225 and 232 to 241; these read SEMD…EAAK and ARSERRDDAR. Residues 246–284 show a composition bias toward low complexity; it reads GARPQQAGRPQGGRPQPAGRPQQGSPRPAPIIADAAPIA. Basic and acidic residues predominate over residues 318-333; sequence PEVRAPKVVKGEDDRR. Residues 457-626 enclose the tr-type G domain; sequence SRPPVVTIMG…LLQAEMLDLK (170 aa). The segment at 466–473 is G1; it reads GHVDHGKT. A GTP-binding site is contributed by 466 to 473; sequence GHVDHGKT. Positions 491-495 are G2; it reads GITQH. The G3 stretch occupies residues 512–515; the sequence is DTPG. Residues 512 to 516 and 566 to 569 contribute to the GTP site; these read DTPGH and NKID. Residues 566–569 form a G4 region; sequence NKID. Positions 602–604 are G5; that stretch reads SAK.

This sequence belongs to the TRAFAC class translation factor GTPase superfamily. Classic translation factor GTPase family. IF-2 subfamily.

Its subcellular location is the cytoplasm. One of the essential components for the initiation of protein synthesis. Protects formylmethionyl-tRNA from spontaneous hydrolysis and promotes its binding to the 30S ribosomal subunits. Also involved in the hydrolysis of GTP during the formation of the 70S ribosomal complex. The polypeptide is Translation initiation factor IF-2 (Brucella abortus (strain 2308)).